The primary structure comprises 79 residues: Acyl carrier protein (79 aa).

Positions 2-77 (SDTAERVKKI…DAIDFINQKT (76 aa)) constitute a Carrier domain. Ser37 is modified (O-(pantetheine 4'-phosphoryl)serine).

This sequence belongs to the acyl carrier protein (ACP) family. 4'-phosphopantetheine is transferred from CoA to a specific serine of apo-ACP by AcpS. This modification is essential for activity because fatty acids are bound in thioester linkage to the sulfhydryl of the prosthetic group.

The protein localises to the cytoplasm. Its pathway is lipid metabolism; fatty acid biosynthesis. Carrier of the growing fatty acid chain in fatty acid biosynthesis. This Rhodospirillum centenum (strain ATCC 51521 / SW) protein is Acyl carrier protein.